The sequence spans 427 residues: O-methyltransferase sol2 (427 aa).

Aspartate 281 contacts S-adenosyl-L-methionine. The active-site Proton acceptor is histidine 327.

The protein belongs to the class I-like SAM-binding methyltransferase superfamily. Cation-independent O-methyltransferase family. COMT subfamily.

It functions in the pathway phytotoxin biosynthesis. Its function is as follows. O-methyltransferase; part of the gene cluster that mediates the biosynthesis of the phytotoxin solanapyrone, a causal agent of early blight disease of potato and tomato. The prosolanapyrone synthase sol1 is a polyketide synthase that produces the octaketide desmethylprosolanapyrone I via sequential condensations of 7 malonyl-CoA units with one acetyl-CoA unit, and one methylation step. The octaketide backbone is further methylated by the sol2 O-methyltransferase to yield prosolanapyrone I. Prosolanapyrone I is hydroxylated to prosolanapyrone II by the cytochrome P450 monooxygenase sol6. The solanapyrone synthase sol5 then catalyzes the oxidation of prosolanapyrone II and the subsequent Diels Alder cycloisomerization of the product prosolanapyrone III to solanapyrones A and D. Solanapyrones A and D are then converted into solanapyrones B and E, respectively, by the sol3 dehydrogenase. This chain is O-methyltransferase sol2 (sol2), found in Alternaria solani.